Here is a 626-residue protein sequence, read N- to C-terminus: uncharacterized protein (626 aa).

A helical membrane pass occupies residues 103 to 123 (AGALLVKFFPLLLLYPLTYLA). The Protein kinase domain occupies 200–618 (FENREPVGSG…DILEAARPFL (419 aa)). ATP contacts are provided by residues 206-214 (VGSGCVAQV) and Lys-311. The active-site Proton acceptor is the Asp-445.

The protein belongs to the protein kinase superfamily. ADCK protein kinase family.

The protein localises to the mitochondrion. Its subcellular location is the membrane. In terms of biological role, the function of this protein is not yet clear. It is not known if it has protein kinase activity and what type of substrate it would phosphorylate (Ser, Thr or Tyr). Involved in the mitochondrial import of CoQ precursors, plays a role in muscle mitochondrial function and fatty acid beta-oxidation. This is an uncharacterized protein from Homo sapiens (Human).